The chain runs to 209 residues: FAS-associated death domain protein (209 aa).

The DED domain occupies 3-81; the sequence is PFLVLLHSVS…RKDLLLRLDD (79 aa). Residues 97-181 enclose the Death domain; the sequence is LRAAMEIICD…VVADLIEEDQ (85 aa). Polar residues predominate over residues 187 to 200; that stretch reads QSGSANPGSFTAWD. The disordered stretch occupies residues 187–209; the sequence is QSGSANPGSFTAWDSGSAAPGAS.

In terms of assembly, can self-associate. Component of the AIM2 PANoptosome complex, a multiprotein complex that drives inflammatory cell death (PANoptosis). Component of the death-induced signaling complex (DISC) composed of cell surface receptor FAS/CD95 or TNFRSF1A, adapter protein FADD and the CASP8 protease; recruitment of CASP8 to the complex is required for processing of CASP8 into the p18 and p10 subunits. Interacts (via death domain) with FAS (via death domain). Interacts directly (via DED domain) with NOL3 (via CARD domain); inhibits death-inducing signaling complex (DISC) assembly by inhibiting the increase in FAS-FADD binding induced by FAS activation. Interacts with CFLAR, PEA15 and MBD4. When phosphorylated, part of a complex containing HIPK3 and FAS. May interact with MAVS/IPS1. Interacts with MOCV v-CFLAR protein and PIDD1. Interacts with RIPK1 and TRADD. Interacts with stimulated TNFRSF10B. Interacts with DDX24. In terms of processing, phosphorylated.

The protein resides in the cytoplasm. Apoptotic adapter molecule that recruits caspases CASP8 or CASP10 to the activated FAS/CD95 or TNFRSF1A/TNFR-1 receptors. The resulting aggregate called the death-inducing signaling complex (DISC) performs CASP8 proteolytic activation. Active CASP8 initiates the subsequent cascade of caspases mediating apoptosis. Involved in interferon-mediated antiviral immune response, playing a role in the positive regulation of interferon signaling. The protein is FAS-associated death domain protein of Bos taurus (Bovine).